The chain runs to 370 residues: Anhydro-N-acetylmuramic acid kinase (370 aa).

12–19 (GTSLDGVD) provides a ligand contact to ATP.

It belongs to the anhydro-N-acetylmuramic acid kinase family.

The catalysed reaction is 1,6-anhydro-N-acetyl-beta-muramate + ATP + H2O = N-acetyl-D-muramate 6-phosphate + ADP + H(+). It participates in amino-sugar metabolism; 1,6-anhydro-N-acetylmuramate degradation. It functions in the pathway cell wall biogenesis; peptidoglycan recycling. Its function is as follows. Catalyzes the specific phosphorylation of 1,6-anhydro-N-acetylmuramic acid (anhMurNAc) with the simultaneous cleavage of the 1,6-anhydro ring, generating MurNAc-6-P. Is required for the utilization of anhMurNAc either imported from the medium or derived from its own cell wall murein, and thus plays a role in cell wall recycling. The sequence is that of Anhydro-N-acetylmuramic acid kinase from Yersinia pseudotuberculosis serotype O:1b (strain IP 31758).